A 532-amino-acid chain; its full sequence is Probable pectinesterase/pectinesterase inhibitor 39 (532 aa).

A signal peptide spans 1–34 (MINNHPIREKPKHIIFNLLSLIFFLIFLSTVVSS). A pectinesterase inhibitor 39 region spans residues 35 to 169 (QSPSYTTHKT…ENLKEIILDI (135 aa)). N-linked (GlcNAc...) asparagine glycosylation is found at Asn62, Asn74, Asn85, Asn172, Asn221, Asn231, Asn244, and Asn287. The pectinesterase 39 stretch occupies residues 221 to 518 (NLSVAIDGTG…FTVGPFIDGS (298 aa)). The substrate site is built by Thr296 and Gln326. The Proton donor; for pectinesterase activity role is filled by Asp349. The active-site Nucleophile; for pectinesterase activity is the Asp370. N-linked (GlcNAc...) asparagine glycans are attached at residues Asn382 and Asn404. Substrate is bound by residues Arg438 and Trp440. N-linked (GlcNAc...) asparagine glycans are attached at residues Asn502 and Asn522.

It in the N-terminal section; belongs to the PMEI family. The protein in the C-terminal section; belongs to the pectinesterase family. As to expression, expressed in siliques but not in flower buds.

It localises to the secreted. It is found in the cell wall. The enzyme catalyses [(1-&gt;4)-alpha-D-galacturonosyl methyl ester](n) + n H2O = [(1-&gt;4)-alpha-D-galacturonosyl](n) + n methanol + n H(+). It functions in the pathway glycan metabolism; pectin degradation; 2-dehydro-3-deoxy-D-gluconate from pectin: step 1/5. Its function is as follows. Acts in the modification of cell walls via demethylesterification of cell wall pectin. The sequence is that of Probable pectinesterase/pectinesterase inhibitor 39 (PME39) from Arabidopsis thaliana (Mouse-ear cress).